Reading from the N-terminus, the 250-residue chain is Probable transcriptional regulatory protein DP2908 (250 aa).

It belongs to the TACO1 family.

Its subcellular location is the cytoplasm. The polypeptide is Probable transcriptional regulatory protein DP2908 (Desulfotalea psychrophila (strain LSv54 / DSM 12343)).